The primary structure comprises 737 residues: Death domain-associated protein 6 (737 aa).

A disordered region spans residues 1-55 (MATANSIIVLDDDDEDEAAAQPGPSHPPPNPASPQAEAPGSSQPHGAGGSSSSGG). The tract at residues 1 to 159 (MATANSIIVL…TSSEPSGNNP (159 aa)) is necessary for interaction with USP7 and ATRX. A Phosphoserine modification is found at serine 25. The span at 33–45 (SPQAEAPGSSQPH) shows a compositional bias: low complexity. Lysine 142 is covalently cross-linked (Glycyl lysine isopeptide (Lys-Gly) (interchain with G-Cter in SUMO2)). The disordered stretch occupies residues 145–184 (LAPAATSSEPSGNNPPTDPSSDPTNAETTASEAPRTRGSR). Positions 149-175 (ATSSEPSGNNPPTDPSSDPTNAETTAS) are enriched in polar residues. The stretch at 179–216 (RTRGSRRQIQRLEQLLALYVAEIRRLQEKELDLSELDD) forms a coiled coil. Residues 182–417 (GSRRQIQRLE…PLKASLDSGE (236 aa)) form an interaction with histone H3.3 region. A Phosphoserine modification is found at serine 212. The tract at residues 346–567 (GIDPALSDPA…SPISQLFELE (222 aa)) is necessary for interaction with USP7. The segment at 382–556 (QDKSEEGERQ…ENLEELLLEE (175 aa)) is disordered. The Nuclear localization signal signature appears at 390 to 394 (RQKRR). Phosphoserine occurs at positions 412 and 424. Polar residues predominate over residues 422–432 (MASQECPTTSK). Positions 432–474 (KPETDDEEDEESEEEEEEEEEEEEEEATDSEEEEDLEQMQEGQ) form a coiled coil. The segment covering 435 to 489 (TDDEEDEESEEEEEEEEEEEEEEATDSEEEEDLEQMQEGQGDDEEEEEEEEEAGQ) has biased composition (acidic residues). Threonine 459 bears the Phosphothreonine mark. A phosphoserine mark is found at serine 494 and serine 497. N6-acetyllysine is present on lysine 511. Residues 517–527 (MGEQQNKEFTV) show a composition bias toward polar residues. The span at 528–547 (SPSSEEPLAPSSIDAESNGE) shows a compositional bias: low complexity. Phosphoserine is present on residues serine 558 and serine 578. The interval 569–719 (EALPLDTTPS…QPSRPGTYKM (151 aa)) is disordered. The span at 579–592 (PEERDISSSRKQSE) shows a compositional bias: basic and acidic residues. The tract at residues 624–737 (CPPCKKSRKE…EEIIVLSDSD (114 aa)) is interaction with SPOP. The Nuclear localization signal signature appears at 626–632 (PCKKSRK). Glycyl lysine isopeptide (Lys-Gly) (interchain with G-Cter in SUMO1) cross-links involve residues lysine 628 and lysine 629. The segment covering 647–657 (ERQRSVHEKNG) has biased composition (basic and acidic residues). A phosphoserine mark is found at serine 665, serine 668, serine 685, serine 699, serine 734, and serine 736. The segment covering 678–713 (DSSTRVDSPSHGLVTSSLCSASQARLSQTPHSQPSR) has biased composition (polar residues). The interval 730–737 (IIVLSDSD) is sumo interaction motif (SIM).

The protein belongs to the DAXX family. As to quaternary structure, homomultimer. Interacts (via C-terminus) with TNFRSF6 (via death domain). Interacts with PAX5, SLC2A4/GLUT4, MAP3K5, TGFBR2, phosphorylated dimeric HSPB1/HSP27, CENPC, ETS1, sumoylated PML, UBE2I, MCRS1 and TP53. Interacts (via N-terminus) with HIPK2 and HIPK3. Interacts with HIPK1, which induces translocation from PML/POD/ND10 nuclear bodies to chromatin and enhances association with HDAC1. Interacts (non-phosphorylated) with PAX3, PAX7, DEK, HDAC1, HDAC2, HDAC3, acetylated histone H4 and histones H2A, H2B, H3, H3.3 and H4. Interacts with SPOP; mediating CUL3-dependent proteasomal degradation. Interacts with CBP; the interaction is dependent the sumoylation of CBP and suppresses CBP transcriptional activity via recruitment of HDAC2 directly in the complex with TP53 and HIPK2. Interacts with AXIN1; the interaction stimulates the interaction of DAXX with TP53, stimulates 'Ser-46' phosphorylation of TP53 on and induces cell death on UV irradiation. Interacts with MDM2; the interaction is direct. Interacts with USP7; the interaction is direct and independent of MDM2 and TP53. Part of a complex with DAXX, MDM2 and USP7 under non-stress conditions. Interacts (via N-terminus) with RASSF1 (via C-terminus); the interaction is independent of MDM2 and TP53; RASSF1 isoform A disrupts interactions among MDM2, DAXX and USP7, thus contributing to the efficient activation of TP53 by promoting MDM2 self-ubiquitination in cell-cycle checkpoint control in response to DNA damage. Interacts with ATRX to form the chromatin remodeling complex ATRX:DAXX. Interacts with HSF1 (via homotrimeric form preferentially); this interaction relieves homotrimeric HSF1 from repression of its transcriptional activity by HSP90-dependent multichaperone complex upon heat shock. Post-translationally, sumoylated with SUMO1 on multiple lysine residues. In terms of processing, polyubiquitinated; which is promoted by CUL3 and SPOP and results in proteasomal degradation. Ubiquitinated by MDM2; inducing its degradation. Deubiquitinated by USP7; leading to stabilize it.

Its subcellular location is the cytoplasm. It localises to the nucleus. The protein resides in the nucleoplasm. The protein localises to the PML body. It is found in the nucleolus. Its subcellular location is the chromosome. It localises to the centromere. In terms of biological role, transcription corepressor known to repress transcriptional potential of several sumoylated transcription factors. Down-regulates basal and activated transcription. Its transcription repressor activity is modulated by recruiting it to subnuclear compartments like the nucleolus or PML/POD/ND10 nuclear bodies through interactions with MCSR1 and PML, respectively. Seems to regulate transcription in PML/POD/ND10 nuclear bodies together with PML and may influence TNFRSF6-dependent apoptosis thereby. Inhibits transcriptional activation of PAX3 and ETS1 through direct protein-protein interactions. Modulates PAX5 activity; the function seems to involve CREBBP. Acts as an adapter protein in a MDM2-DAXX-USP7 complex by regulating the RING-finger E3 ligase MDM2 ubiquitination activity. Under non-stress condition, in association with the deubiquitinating USP7, prevents MDM2 self-ubiquitination and enhances the intrinsic E3 ligase activity of MDM2 towards TP53, thereby promoting TP53 ubiquitination and subsequent proteasomal degradation. Upon DNA damage, its association with MDM2 and USP7 is disrupted, resulting in increased MDM2 autoubiquitination and consequently, MDM2 degradation, which leads to TP53 stabilization. Acts as a histone chaperone that facilitates deposition of histone H3.3. Acts as a targeting component of the chromatin remodeling complex ATRX:DAXX which has ATP-dependent DNA translocase activity and catalyzes the replication-independent deposition of histone H3.3 in pericentric DNA repeats outside S-phase and telomeres, and the in vitro remodeling of H3.3-containing nucleosomes. Does not affect the ATPase activity of ATRX but alleviates its transcription repression activity. Upon neuronal activation associates with regulatory elements of selected immediate early genes where it promotes deposition of histone H3.3 which may be linked to transcriptional induction of these genes. Required for the recruitment of histone H3.3:H4 dimers to PML-nuclear bodies (PML-NBs); the process is independent of ATRX and facilitated by ASF1A; PML-NBs are suggested to function as regulatory sites for the incorporation of newly synthesized histone H3.3 into chromatin. Proposed to mediate activation of the JNK pathway and apoptosis via MAP3K5 in response to signaling from TNFRSF6 and TGFBR2. Interaction with HSPB1/HSP27 may prevent interaction with TNFRSF6 and MAP3K5 and block DAXX-mediated apoptosis. In contrast, in lymphoid cells JNC activation and TNFRSF6-mediated apoptosis may not involve DAXX. Plays a role as a positive regulator of the heat shock transcription factor HSF1 activity during the stress protein response. The sequence is that of Death domain-associated protein 6 (DAXX) from Canis lupus familiaris (Dog).